Here is a 211-residue protein sequence, read N- to C-terminus: Large ribosomal subunit protein uL4 (211 aa).

A compositionally biased stretch (polar residues) spans 41–53 (QAHSRQGTASTLT). Residues 41–85 (QAHSRQGTASTLTRAEVRGGGRKPYKQKGTGRARQGSIRTPLRPG) form a disordered region. The segment covering 60-71 (GGRKPYKQKGTG) has biased composition (basic residues).

This sequence belongs to the universal ribosomal protein uL4 family. As to quaternary structure, part of the 50S ribosomal subunit.

In terms of biological role, one of the primary rRNA binding proteins, this protein initially binds near the 5'-end of the 23S rRNA. It is important during the early stages of 50S assembly. It makes multiple contacts with different domains of the 23S rRNA in the assembled 50S subunit and ribosome. Functionally, forms part of the polypeptide exit tunnel. The protein is Large ribosomal subunit protein uL4 of Prochlorococcus marinus (strain SARG / CCMP1375 / SS120).